A 473-amino-acid polypeptide reads, in one-letter code: Bifunctional protein HldE (473 aa).

The tract at residues 1-317 is ribokinase; sequence MKLSMPRFDQ…RRAIQREEGS (317 aa). 194 to 197 lines the ATP pocket; the sequence is NLSE. Asp-263 is a catalytic residue. The tract at residues 343–473 is cytidylyltransferase; sequence FTNGCFDILH…TAIVEKIRKN (131 aa).

This sequence in the N-terminal section; belongs to the carbohydrate kinase PfkB family. It in the C-terminal section; belongs to the cytidylyltransferase family. As to quaternary structure, homodimer.

It carries out the reaction D-glycero-beta-D-manno-heptose 7-phosphate + ATP = D-glycero-beta-D-manno-heptose 1,7-bisphosphate + ADP + H(+). It catalyses the reaction D-glycero-beta-D-manno-heptose 1-phosphate + ATP + H(+) = ADP-D-glycero-beta-D-manno-heptose + diphosphate. It participates in nucleotide-sugar biosynthesis; ADP-L-glycero-beta-D-manno-heptose biosynthesis; ADP-L-glycero-beta-D-manno-heptose from D-glycero-beta-D-manno-heptose 7-phosphate: step 1/4. The protein operates within nucleotide-sugar biosynthesis; ADP-L-glycero-beta-D-manno-heptose biosynthesis; ADP-L-glycero-beta-D-manno-heptose from D-glycero-beta-D-manno-heptose 7-phosphate: step 3/4. Its function is as follows. Catalyzes the phosphorylation of D-glycero-D-manno-heptose 7-phosphate at the C-1 position to selectively form D-glycero-beta-D-manno-heptose-1,7-bisphosphate. Functionally, catalyzes the ADP transfer from ATP to D-glycero-beta-D-manno-heptose 1-phosphate, yielding ADP-D-glycero-beta-D-manno-heptose. This Pseudomonas putida (strain W619) protein is Bifunctional protein HldE.